A 152-amino-acid polypeptide reads, in one-letter code: Large ribosomal subunit protein uL15 (152 aa).

The segment at 1 to 66 (MLQLHTIKPN…PLHRRLPKKG (66 aa)) is disordered. Over residues 24–36 (ESSGLGKTCGKGN) the composition is skewed to gly residues.

The protein belongs to the universal ribosomal protein uL15 family. As to quaternary structure, part of the 50S ribosomal subunit.

In terms of biological role, binds to the 23S rRNA. This Akkermansia muciniphila (strain ATCC BAA-835 / DSM 22959 / JCM 33894 / BCRC 81048 / CCUG 64013 / CIP 107961 / Muc) protein is Large ribosomal subunit protein uL15.